A 499-amino-acid chain; its full sequence is Endoglucanase (499 aa).

An N-terminal signal peptide occupies residues 1-29; that stretch reads MKRSISIFITCLLITLLTMGGMIASPASA. Substrate contacts are provided by residues His65, 69–70, Tyr96, and His131; that span reads WY. Glu169 serves as the catalytic Proton donor. Tyr231 provides a ligand contact to substrate. The Nucleophile role is filled by Glu257. Residues 263–264, Trp291, and 296–298 each bind substrate; these read AS and KQE. One can recognise a CBM3 domain in the interval 350–499; the sequence is QENGISVQYR…GKLIWGTEPN (150 aa).

The protein belongs to the glycosyl hydrolase 5 (cellulase A) family.

The catalysed reaction is Endohydrolysis of (1-&gt;4)-beta-D-glucosidic linkages in cellulose, lichenin and cereal beta-D-glucans.. This Bacillus subtilis (strain 168) protein is Endoglucanase (eglS).